Consider the following 311-residue polypeptide: Probable hydrogen peroxide-inducible genes activator (311 aa).

An HTH lysR-type domain is found at 8–65; sequence PTIAGLRAFVAVVEKGHFSAAASFLGVRQSTLSQALAALESGLGVQLIERSTRRVFVT. The H-T-H motif DNA-binding region spans 25-44; the sequence is FSAAASFLGVRQSTLSQALA.

The protein belongs to the LysR transcriptional regulatory family.

Required for the induction the katG gene for catalase. Involved in the response to hydrogen peroxide. The chain is Probable hydrogen peroxide-inducible genes activator (oxyR) from Mycobacterium leprae (strain TN).